The chain runs to 459 residues: Cysteine--tRNA ligase (459 aa).

Cys-29 is a binding site for Zn(2+). The short motif at 31 to 41 (VTTYDYCHIGH) is the 'HIGH' region element. Zn(2+) is bound by residues Cys-210, His-235, and Glu-239. The short motif at 267–271 (KMSKS) is the 'KMSKS' region element. Residue Lys-270 participates in ATP binding.

Belongs to the class-I aminoacyl-tRNA synthetase family. As to quaternary structure, monomer. Requires Zn(2+) as cofactor.

Its subcellular location is the cytoplasm. The catalysed reaction is tRNA(Cys) + L-cysteine + ATP = L-cysteinyl-tRNA(Cys) + AMP + diphosphate. This is Cysteine--tRNA ligase from Idiomarina loihiensis (strain ATCC BAA-735 / DSM 15497 / L2-TR).